We begin with the raw amino-acid sequence, 212 residues long: Lysozyme g-like protein 2 (212 aa).

The N-terminal stretch at Met-1–Gly-19 is a signal peptide. Cystine bridges form between Cys-39–Cys-92 and Cys-53–Cys-61. Glu-105 is an active-site residue.

It belongs to the glycosyl hydrolase 23 family. Strong expression detected in the eye and weak expression in the testis. No expression is observed in any other tissues.

It localises to the secreted. May act as a potent antibacterial protein that may play a role in the innate immunity. The sequence is that of Lysozyme g-like protein 2 (LYG2) from Homo sapiens (Human).